The sequence spans 56 residues: Small ribosomal subunit protein uS14 (56 aa).

Residues Cys21, Cys24, Cys39, and Cys42 each contribute to the Zn(2+) site.

It belongs to the universal ribosomal protein uS14 family. Zinc-binding uS14 subfamily. In terms of assembly, part of the 30S ribosomal subunit. Zn(2+) serves as cofactor.

Functionally, binds 16S rRNA, required for the assembly of 30S particles. The sequence is that of Small ribosomal subunit protein uS14 from Pyrococcus furiosus (strain ATCC 43587 / DSM 3638 / JCM 8422 / Vc1).